The sequence spans 254 residues: Small ribosomal subunit protein uS2 (254 aa).

The protein belongs to the universal ribosomal protein uS2 family.

The polypeptide is Small ribosomal subunit protein uS2 (Legionella pneumophila (strain Lens)).